Reading from the N-terminus, the 269-residue chain is Myelin protein zero-like protein 1 (269 aa).

The N-terminal stretch at 1 to 35 is a signal peptide; it reads MAAPAGAGALIASPDRRRCLWSVLAAALGLLTYGV. One can recognise an Ig-like V-type domain in the interval 36 to 146; the sequence is SALEVYTPKE…VKNPPDIVVQ (111 aa). Residues 36–162 lie on the Extracellular side of the membrane; that stretch reads SALEVYTPKE…YVVEKEILPA (127 aa). N50, N64, and N130 each carry an N-linked (GlcNAc...) asparagine glycan. The cysteines at positions 58 and 135 are disulfide-linked. Residues 163 to 183 traverse the membrane as a helical segment; the sequence is FPVWVVVGIVTAVVLGLTLLI. The Cytoplasmic segment spans residues 184–269; it reads TMILAVIYRR…SVVYADIRKN (86 aa). Residues 202 to 238 form a disordered region; that stretch reads GCNTSENVSPVKQVSRKSPSDTEGLVKSLPSGSHQGP. The span at 203-213 shows a compositional bias: polar residues; the sequence is CNTSENVSPVK. Phosphoserine occurs at positions 206, 210, 219, and 221. The short motif at 239–244 is the ITIM motif 1 element; that stretch reads VIYAQL. At Y241 the chain carries Phosphotyrosine. S260 carries the post-translational modification Phosphoserine. The short motif at 261-266 is the ITIM motif 2 element; sequence VVYADI. Y263 bears the Phosphotyrosine mark.

This sequence belongs to the myelin P0 protein family. In terms of assembly, interacts with phosphorylated PTPN11/SHP-2. In terms of processing, phosphorylated on tyrosine residues upon stimulation with pervanadate and concanavalin-A (ConA). Phosphorylation at Tyr-241 and Tyr-263 is required for interaction with PTPN11/SHP-2. Dephosphorylated by PTPN11/SHP-2 (in vitro). Post-translationally, N-glycosylated.

It localises to the membrane. Its function is as follows. Cell surface receptor, which is involved in signal transduction processes. Recruits PTPN11/SHP-2 to the cell membrane and is a putative substrate of PTPN11/SHP-2. Is a major receptor for concanavalin-A (ConA) and is involved in cellular signaling induced by ConA, which probably includes Src family tyrosine-protein kinases. May be involved in regulation of integrin-mediated cell motility. This is Myelin protein zero-like protein 1 (MPZL1) from Bos taurus (Bovine).